Here is a 245-residue protein sequence, read N- to C-terminus: Enolase-phosphatase E1 (245 aa).

Mg(2+) is bound by residues Asp14 and Glu16. Residues 141–142 and Lys175 each bind substrate; that span reads SS. Residue Asp200 participates in Mg(2+) binding.

This sequence belongs to the HAD-like hydrolase superfamily. MasA/MtnC family. Monomer. Mg(2+) is required as a cofactor.

It is found in the cytoplasm. Its subcellular location is the nucleus. The enzyme catalyses 5-methylsulfanyl-2,3-dioxopentyl phosphate + H2O = 1,2-dihydroxy-5-(methylsulfanyl)pent-1-en-3-one + phosphate. Its pathway is amino-acid biosynthesis; L-methionine biosynthesis via salvage pathway; L-methionine from S-methyl-5-thio-alpha-D-ribose 1-phosphate: step 3/6. It functions in the pathway amino-acid biosynthesis; L-methionine biosynthesis via salvage pathway; L-methionine from S-methyl-5-thio-alpha-D-ribose 1-phosphate: step 4/6. Its function is as follows. Bifunctional enzyme that catalyzes the enolization of 2,3-diketo-5-methylthiopentyl-1-phosphate (DK-MTP-1-P) into the intermediate 2-hydroxy-3-keto-5-methylthiopentenyl-1-phosphate (HK-MTPenyl-1-P), which is then dephosphorylated to form the acireductone 1,2-dihydroxy-3-keto-5-methylthiopentene (DHK-MTPene). This is Enolase-phosphatase E1 from Drosophila grimshawi (Hawaiian fruit fly).